The sequence spans 32 residues: WLGCARVKEACGPWEWPCCSGLKCDGSECHPQ.

Disulfide bonds link C4-C19, C11-C24, and C18-C29.

Belongs to the neurotoxin 14 (magi-1) family. It to aptotoxin III. Expressed by the venom gland.

The protein localises to the secreted. In terms of biological role, is both paralytic and lethal, when injected into lepidopteran larvae. Is a slower acting toxin, being lethal at 24 hours, but not paralytic at 1 hour post-injection. The protein is U3-cyrtautoxin-As1a of Apomastus schlingeri (Trap-door spider).